Reading from the N-terminus, the 309-residue chain is Ribonuclease Z (309 aa).

Residues His63, His65, Asp67, His68, His145, Asp216, and His274 each coordinate Zn(2+). Asp67 functions as the Proton acceptor in the catalytic mechanism.

It belongs to the RNase Z family. Homodimer. The cofactor is Zn(2+).

The enzyme catalyses Endonucleolytic cleavage of RNA, removing extra 3' nucleotides from tRNA precursor, generating 3' termini of tRNAs. A 3'-hydroxy group is left at the tRNA terminus and a 5'-phosphoryl group is left at the trailer molecule.. Zinc phosphodiesterase, which displays some tRNA 3'-processing endonuclease activity. Probably involved in tRNA maturation, by removing a 3'-trailer from precursor tRNA. This is Ribonuclease Z from Streptococcus sanguinis (strain SK36).